The chain runs to 179 residues: Tegument protein UL55 homolog (179 aa).

The protein belongs to the alphaherpesvirinae HHV-1 UL55 family.

It localises to the virion tegument. The protein localises to the host nucleus matrix. The polypeptide is Tegument protein UL55 homolog (Homo sapiens (Human)).